The chain runs to 374 residues: WAT1-related protein At1g60050 (374 aa).

The next 10 helical transmembrane spans lie at 11–31 (IVPF…TILA), 42–62 (FVFI…YSFY), 82–102 (IFLL…LGLS), 107–127 (IVVC…SLAL), 145–165 (IGTL…GPFI), 194–214 (WALG…WNII), 228–248 (VVSA…AFME), 255–275 (ELKL…GSII), 292–312 (VPLF…SFFV), and 315–335 (LHYG…LIMW). Residues 26–155 (ALTILAKTAL…GTLICFTGAF (130 aa)) enclose the EamA domain.

The protein belongs to the drug/metabolite transporter (DMT) superfamily. Plant drug/metabolite exporter (P-DME) (TC 2.A.7.4) family.

The protein localises to the membrane. The chain is WAT1-related protein At1g60050 from Arabidopsis thaliana (Mouse-ear cress).